The following is a 345-amino-acid chain: GTPase Obg (345 aa).

The 159-residue stretch at 1 to 159 (MKFLDQAKVY…KWIWLRLKLI (159 aa)) folds into the Obg domain. The 168-residue stretch at 160–327 (ADAGLVGLPN…ALRALLAVID (168 aa)) folds into the OBG-type G domain. GTP is bound by residues 166–173 (GLPNAGKS), 191–195 (FTTLH), 212–215 (DIPG), 279–282 (SKID), and 308–310 (SSQ). Residues Ser173 and Thr193 each coordinate Mg(2+).

The protein belongs to the TRAFAC class OBG-HflX-like GTPase superfamily. OBG GTPase family. As to quaternary structure, monomer. The cofactor is Mg(2+).

It is found in the cytoplasm. In terms of biological role, an essential GTPase which binds GTP, GDP and possibly (p)ppGpp with moderate affinity, with high nucleotide exchange rates and a fairly low GTP hydrolysis rate. Plays a role in control of the cell cycle, stress response, ribosome biogenesis and in those bacteria that undergo differentiation, in morphogenesis control. This chain is GTPase Obg, found in Azorhizobium caulinodans (strain ATCC 43989 / DSM 5975 / JCM 20966 / LMG 6465 / NBRC 14845 / NCIMB 13405 / ORS 571).